The primary structure comprises 664 residues: Intraflagellar transport protein 70B (664 aa).

7 TPR repeats span residues 11–44 (DGEFTAVVYRLIRDSRYSEAVQLLSAELQGSPRS), 45–78 (RAGLSLLAYCYYRLQEFELAAECYEQLSQMHPEL), 153–186 (YDGQINLGCLLYKEGHYEAACSKFLAALQASGYQ), 188–220 (DISYNLALAYYSSRQYAPALKHIADIIERGIRQ), 385–418 (LTEQLRRLTIQVQDARHSRDDESAKKAVNDYDET), 423–456 (IPVLMAQAKIYWNLENYPMVEKIFRKSVEFCNDH), and 458–491 (VWKLNVAHVLFMQENKYKEAIGFYEPIVKKNYDN). Residues 507 to 534 (YIMTSQNEEAEELMRKIEKEEEQLSYDD) are a coiled coil. The TPR 8 repeat unit spans residues 543-576 (CIVNLVIGTLYCAKGNYDFGISRVIKSLEPYHKK).

The protein belongs to the TTC30/dfy-1/fleer family. Interacts with the IFT B complex components IFT27, IFT46, IFT74, IFT52, IFT57, IFT80, IFT81 and IFT88. Interacts with KIF17.

The protein resides in the cell projection. It is found in the cilium. In terms of biological role, required for polyglutamylation of axonemal tubulin. Plays a role in anterograde intraflagellar transport (IFT), the process by which cilia precursors are transported from the base of the cilium to the site of their incorporation at the tip. This chain is Intraflagellar transport protein 70B (Ift70b), found in Rattus norvegicus (Rat).